Here is a 334-residue protein sequence, read N- to C-terminus: tRNA uridine(34) hydroxylase (334 aa).

Positions S123–S217 constitute a Rhodanese domain. Catalysis depends on C177, which acts as the Cysteine persulfide intermediate.

This sequence belongs to the TrhO family.

It carries out the reaction uridine(34) in tRNA + AH2 + O2 = 5-hydroxyuridine(34) in tRNA + A + H2O. Functionally, catalyzes oxygen-dependent 5-hydroxyuridine (ho5U) modification at position 34 in tRNAs. This chain is tRNA uridine(34) hydroxylase, found in Shewanella baltica (strain OS185).